Reading from the N-terminus, the 450-residue chain is Molybdate-anion transporter (450 aa).

Helical transmembrane passes span M1–L21, F38–L58, I79–V99, F128–F148, I167–V187, A191–L211, V249–L269, G278–L298, P311–F331, F344–L364, G376–L396, and F409–V429.

This sequence belongs to the major facilitator superfamily.

The protein resides in the cell membrane. Its function is as follows. Mediates high-affinity intracellular uptake of the rare oligo-element molybdenum. In Mus musculus (Mouse), this protein is Molybdate-anion transporter (Mfsd5).